A 364-amino-acid chain; its full sequence is Probable transcription factor At4g00390 (364 aa).

Residues 1–149 form a disordered region; that stretch reads MTKKLDPPTA…STKRVKKDEE (149 aa). Residues 13-32 are compositionally biased toward acidic residues; it reads SDEDDVETSEDDSSSSEEDE. The segment covering 39 to 80 has biased composition (low complexity); the sequence is ATTAAAPAKSTAVSAATPAKSTSVSAAAPSKSTAVSAAADSD. Positions 81-93 are enriched in acidic residues; sequence SGSESETDSDSES.

Belongs to the GeBP family.

In Arabidopsis thaliana (Mouse-ear cress), this protein is Probable transcription factor At4g00390.